Reading from the N-terminus, the 261-residue chain is MRILITNDDGINAPGLMVLHEIATRLAGQDGEVWTVAPAFEQSGVGHCISYTRPMMVAQMGPRRFAAEGSPADCVLAGLHDVMKDSPPDLVLSGVNRGNNSAENTLYSGTIGGAMEAALQGLPAIALSQYYGPRNNAIENPFEASAQHGVDVVQRILAHTPQETGGYRLFYNVNFPPVPGDEVLGIRLATQGFREGLGFSTEPHNAPSGRRFLWIKGGDQHRPTAPGSDAQLNLEGYISVTPMRADLTAHDMMAPLAGINT.

A divalent metal cation is bound by residues aspartate 8, aspartate 9, serine 43, and asparagine 96.

Belongs to the SurE nucleotidase family. A divalent metal cation serves as cofactor.

It is found in the cytoplasm. The enzyme catalyses a ribonucleoside 5'-phosphate + H2O = a ribonucleoside + phosphate. Functionally, nucleotidase that shows phosphatase activity on nucleoside 5'-monophosphates. This chain is 5'-nucleotidase SurE, found in Roseobacter denitrificans (strain ATCC 33942 / OCh 114) (Erythrobacter sp. (strain OCh 114)).